Reading from the N-terminus, the 119-residue chain is uncharacterized protein (119 aa).

This is an uncharacterized protein from Dactylococcopsis salina (Myxobaktron salinum).